We begin with the raw amino-acid sequence, 565 residues long: Adenine deaminase (565 aa).

Belongs to the metallo-dependent hydrolases superfamily. Adenine deaminase family. It depends on Mn(2+) as a cofactor.

It carries out the reaction adenine + H2O + H(+) = hypoxanthine + NH4(+). This is Adenine deaminase from Cereibacter sphaeroides (strain ATCC 17023 / DSM 158 / JCM 6121 / CCUG 31486 / LMG 2827 / NBRC 12203 / NCIMB 8253 / ATH 2.4.1.) (Rhodobacter sphaeroides).